Consider the following 548-residue polypeptide: Glucose-6-phosphate isomerase (548 aa).

Glutamate 353 functions as the Proton donor in the catalytic mechanism. Catalysis depends on residues histidine 384 and lysine 512.

The protein belongs to the GPI family.

Its subcellular location is the cytoplasm. The enzyme catalyses alpha-D-glucose 6-phosphate = beta-D-fructose 6-phosphate. It participates in carbohydrate biosynthesis; gluconeogenesis. It functions in the pathway carbohydrate degradation; glycolysis; D-glyceraldehyde 3-phosphate and glycerone phosphate from D-glucose: step 2/4. Its function is as follows. Catalyzes the reversible isomerization of glucose-6-phosphate to fructose-6-phosphate. The chain is Glucose-6-phosphate isomerase from Chlorobium chlorochromatii (strain CaD3).